The chain runs to 749 residues: Protein SWAP (749 aa).

The segment at S8–F124 is dry CEEERYL. A compositionally biased stretch (basic and acidic residues) spans E105–Q118. The disordered stretch occupies residues E105–I149. Residues I166 to Y209 form an SURP motif 1 repeat. The interval H256–V310 is disordered. The stretch at I391–Y431 is one SURP motif 2 repeat. Residues P458–S478 are compositionally biased toward low complexity. 3 disordered regions span residues P458–L498, L537–R592, and K608–R749. Residues R538 to P552 are compositionally biased toward basic and acidic residues. Over residues P560–D569 the composition is skewed to polar residues. Pro residues predominate over residues F574–P583. 2 stretches are compositionally biased toward basic and acidic residues: residues K608–D659 and E679–E689. Basic residues-rich tracts occupy residues R690–R704 and E714–R749.

It is a regulator of pre-mRNA splicing (and, possibly, of other RNA processing events). It may regulate its own expression at the level of RNA processing. This is Protein SWAP (swp-1) from Caenorhabditis elegans.